The sequence spans 137 residues: Large ribosomal subunit protein uL16 (137 aa).

Belongs to the universal ribosomal protein uL16 family. As to quaternary structure, part of the 50S ribosomal subunit.

Its function is as follows. Binds 23S rRNA and is also seen to make contacts with the A and possibly P site tRNAs. The polypeptide is Large ribosomal subunit protein uL16 (Nitrobacter winogradskyi (strain ATCC 25391 / DSM 10237 / CIP 104748 / NCIMB 11846 / Nb-255)).